The chain runs to 79 residues: Acyl carrier protein (79 aa).

The region spanning S2 to A77 is the Carrier domain. S37 is subject to O-(pantetheine 4'-phosphoryl)serine.

It belongs to the acyl carrier protein (ACP) family. In terms of processing, 4'-phosphopantetheine is transferred from CoA to a specific serine of apo-ACP by AcpS. This modification is essential for activity because fatty acids are bound in thioester linkage to the sulfhydryl of the prosthetic group.

The protein localises to the cytoplasm. Its pathway is lipid metabolism; fatty acid biosynthesis. Functionally, carrier of the growing fatty acid chain in fatty acid biosynthesis. This Methylibium petroleiphilum (strain ATCC BAA-1232 / LMG 22953 / PM1) protein is Acyl carrier protein.